The following is a 100-amino-acid chain: Large ribosomal subunit protein bL21 (100 aa).

The protein belongs to the bacterial ribosomal protein bL21 family. Part of the 50S ribosomal subunit. Contacts protein L20.

Its function is as follows. This protein binds to 23S rRNA in the presence of protein L20. This is Large ribosomal subunit protein bL21 from Mycoplasma mycoides subsp. mycoides SC (strain CCUG 32753 / NCTC 10114 / PG1).